The sequence spans 862 residues: Phosphofurin acidic cluster sorting protein 2 (862 aa).

Disordered stretches follow at residues 151 to 215 (HEDS…TTSM), 263 to 436 (LDVE…TRSQ), and 658 to 713 (SSAT…SQGV). Residues 263-272 (LDVENPSDSG) are compositionally biased toward low complexity. Basic and acidic residues predominate over residues 313-328 (SHREPPSPADVPEKTR). Positions 332–344 (GKQQLSDSVSDTV) are enriched in polar residues. 5 positions are modified to phosphoserine: serine 361, serine 387, serine 424, serine 662, and serine 665. Low complexity-rich tracts occupy residues 658 to 693 (SSAT…KEAS) and 700 to 710 (PSVSGGLSSPS).

It belongs to the PACS family. Interacts with BID and PKD2. Interacts with SIRT1. Interacts with HDAC1. Interacts with TRPV1. Interacts with WDR37.

The protein resides in the endoplasmic reticulum. The protein localises to the mitochondrion. Multifunctional sorting protein that controls the endoplasmic reticulum (ER)-mitochondria communication, including the apposition of mitochondria with the ER and ER homeostasis. In addition, in response to apoptotic inducer, translocates BIB to mitochondria, which initiates a sequence of events including the formation of mitochondrial truncated BID, the release of cytochrome c, the activation of caspase-3 thereby causing cell death. May also involved in ion channel trafficking, directing acidic cluster-containing ion channels to distinct subcellular compartments. The sequence is that of Phosphofurin acidic cluster sorting protein 2 (Pacs2) from Mus musculus (Mouse).